The sequence spans 729 residues: Polyribonucleotide nucleotidyltransferase (729 aa).

Residues Asp516 and Asp522 each contribute to the Mg(2+) site. The 61-residue stretch at 581–641 (PSTEHFSINP…EKVAAAKEHI (61 aa)) folds into the KH domain. Residues 658–725 (GKTYVGKVKK…KGKKVELATP (68 aa)) form the S1 motif domain.

Belongs to the polyribonucleotide nucleotidyltransferase family. Requires Mg(2+) as cofactor.

It is found in the cytoplasm. It carries out the reaction RNA(n+1) + phosphate = RNA(n) + a ribonucleoside 5'-diphosphate. In terms of biological role, involved in mRNA degradation. Catalyzes the phosphorolysis of single-stranded polyribonucleotides processively in the 3'- to 5'-direction. The protein is Polyribonucleotide nucleotidyltransferase of Sulfurovum sp. (strain NBC37-1).